Reading from the N-terminus, the 159-residue chain is Single-stranded DNA-binding protein 2 (159 aa).

An SSB domain is found at 2-104 (MNRVVLVGRL…VVAESVQFLE (103 aa)). Residues 106–159 (RNHAEGATSNNYQNEANYSNNNKTSSYRADTSQKSDSFANEGKPIDINPDDLPF) are disordered. Residues 114–127 (SNNYQNEANYSNNN) show a composition bias toward low complexity. Residues 128-143 (KTSSYRADTSQKSDSF) are compositionally biased toward polar residues.

Homotetramer.

This chain is Single-stranded DNA-binding protein 2 (ssb2), found in Listeria innocua serovar 6a (strain ATCC BAA-680 / CLIP 11262).